The following is a 245-amino-acid chain: 1-(5-phosphoribosyl)-5-[(5-phosphoribosylamino)methylideneamino] imidazole-4-carboxamide isomerase (245 aa).

The active-site Proton acceptor is aspartate 7. Aspartate 129 serves as the catalytic Proton donor.

Belongs to the HisA/HisF family.

It localises to the cytoplasm. The enzyme catalyses 1-(5-phospho-beta-D-ribosyl)-5-[(5-phospho-beta-D-ribosylamino)methylideneamino]imidazole-4-carboxamide = 5-[(5-phospho-1-deoxy-D-ribulos-1-ylimino)methylamino]-1-(5-phospho-beta-D-ribosyl)imidazole-4-carboxamide. The protein operates within amino-acid biosynthesis; L-histidine biosynthesis; L-histidine from 5-phospho-alpha-D-ribose 1-diphosphate: step 4/9. The chain is 1-(5-phosphoribosyl)-5-[(5-phosphoribosylamino)methylideneamino] imidazole-4-carboxamide isomerase from Salmonella arizonae (strain ATCC BAA-731 / CDC346-86 / RSK2980).